Consider the following 104-residue polypeptide: A-type ATP synthase subunit F (104 aa).

This sequence belongs to the V-ATPase F subunit family. Has multiple subunits with at least A(3), B(3), C, D, E, F, H, I and proteolipid K(x).

The protein resides in the cell membrane. Component of the A-type ATP synthase that produces ATP from ADP in the presence of a proton gradient across the membrane. The protein is A-type ATP synthase subunit F of Thermoplasma acidophilum (strain ATCC 25905 / DSM 1728 / JCM 9062 / NBRC 15155 / AMRC-C165).